The following is a 456-amino-acid chain: MPASTSIPETPSKLPDALLVNSDPASKVDNVSVKIEQESPLALEGSPLPTVSDVLPETNNAHEEVSSSSWSLSSSDSIMSYDSLSDDVSVLSFLDCPLTTFETAPSIASFSNSAADVSSHSRSSSSWSAKLSRFTKHASKPSLSSNSSDSSFSKSGSESNALSSRGSFELEPHGIHRHVSRAKRLLSKFYSKFHHKKEDSSFDPLAPLVFAPNTSRVLRVTNEANASAISLEKATSLSSQEQPGSEIKKELSLYDHEFDQILDLAIKAKKDGNLENAIEFLEYIMPEVASQQNFVPYELAELYKQRGTSQDLKSILPLYMLAASLGHDRSSFLVGEAFFYGTYGARENKLRALQYYHLANDKGNADAMLALCKLYLRGLPGHIFPSSRRAFEYAHRAAMLGHAPACYVLGKFYETGVGCVKDLAKSEAGFRAGLINDSPITDADALQIASTLVLLQ.

Disordered stretches follow at residues 1–20 (MPAS…ALLV), 38–74 (ESPL…SLSS), and 139–158 (SKPS…SGSE). Residues 140-158 (KPSLSSNSSDSSFSKSGSE) show a composition bias toward low complexity. 2 positions are modified to phosphoserine: Ser-227 and Ser-230. Sel1-like repeat units follow at residues 293–327 (NFVP…SLGH), 328–364 (DRSS…DKGN), 365–402 (ADAM…MLGH), and 403–438 (APAC…INDS).

Its function is as follows. Involved in chitin biosynthesis. This chain is Chitin synthase regulatory factor 1 (chr1), found in Schizosaccharomyces pombe (strain 972 / ATCC 24843) (Fission yeast).